Consider the following 594-residue polypeptide: Aspartate--tRNA(Asp/Asn) ligase (594 aa).

Glu-173 serves as a coordination point for L-aspartate. The interval 197 to 200 is aspartate; the sequence is QLFK. Arg-219 is an L-aspartate binding site. Residues 219 to 221 and Gln-228 contribute to the ATP site; that span reads RDE. Residue His-449 participates in L-aspartate binding. Glu-482 lines the ATP pocket. Position 489 (Arg-489) interacts with L-aspartate. Residue 534–537 coordinates ATP; it reads GLDR.

This sequence belongs to the class-II aminoacyl-tRNA synthetase family. Type 1 subfamily. As to quaternary structure, homodimer.

It localises to the cytoplasm. It catalyses the reaction tRNA(Asx) + L-aspartate + ATP = L-aspartyl-tRNA(Asx) + AMP + diphosphate. Aspartyl-tRNA synthetase with relaxed tRNA specificity since it is able to aspartylate not only its cognate tRNA(Asp) but also tRNA(Asn). Reaction proceeds in two steps: L-aspartate is first activated by ATP to form Asp-AMP and then transferred to the acceptor end of tRNA(Asp/Asn). This is Aspartate--tRNA(Asp/Asn) ligase from Saccharophagus degradans (strain 2-40 / ATCC 43961 / DSM 17024).